Here is a 177-residue protein sequence, read N- to C-terminus: Large ribosomal subunit protein uL6 (177 aa).

It belongs to the universal ribosomal protein uL6 family. In terms of assembly, part of the 50S ribosomal subunit.

This protein binds to the 23S rRNA, and is important in its secondary structure. It is located near the subunit interface in the base of the L7/L12 stalk, and near the tRNA binding site of the peptidyltransferase center. This chain is Large ribosomal subunit protein uL6, found in Rickettsia conorii (strain ATCC VR-613 / Malish 7).